The primary structure comprises 1695 residues: Protein TOPAZ1 (1695 aa).

Disordered regions lie at residues 1-128, 441-474, and 725-753; these read MRRH…DDPQ, MAQTEDFKSMKSSIGKSPNEYHIEKRSSQEELRR, and AEVRQNRSKESVSMTTSGPQTLSIQNSVT. Basic residues predominate over residues 43–52; sequence RRKNRQKRRM. 3 stretches are compositionally biased toward basic and acidic residues: residues 59–68, 92–113, and 459–474; these read GKDKVERDRS, SDRRGIQAAKEAELRLQTERHT, and NEYHIEKRSSQEELRR. Residues 735–753 show a composition bias toward polar residues; sequence SVSMTTSGPQTLSIQNSVT.

The protein localises to the cytoplasm. The protein resides in the cytosol. Its function is as follows. Important for normal spermatogenesis and male fertility. Specifically required for progression to the post-meiotic stages of spermatocyte development. Seems to be necessary for normal expression levels of a number of testis-expressed gene transcripts, although its role in this process is unclear. The chain is Protein TOPAZ1 (TOPAZ1) from Callithrix jacchus (White-tufted-ear marmoset).